Reading from the N-terminus, the 238-residue chain is 5-amino-6-(5-phospho-D-ribitylamino)uracil phosphatase YigB (238 aa).

Catalysis depends on aspartate 16, which acts as the Nucleophile. 3 residues coordinate Mg(2+): aspartate 16, aspartate 18, and aspartate 188. Residue 16–18 (DLD) coordinates substrate.

It belongs to the HAD-like hydrolase superfamily. Mg(2+) serves as cofactor. Requires Mn(2+) as cofactor. The cofactor is Co(2+). It depends on Zn(2+) as a cofactor.

The enzyme catalyses 5-amino-6-(5-phospho-D-ribitylamino)uracil + H2O = 5-amino-6-(D-ribitylamino)uracil + phosphate. It functions in the pathway cofactor biosynthesis; riboflavin biosynthesis; 5-amino-6-(D-ribitylamino)uracil from GTP: step 4/4. Functionally, catalyzes the dephosphorylation of 5-amino-6-(5-phospho-D-ribitylamino)uracil, and thus could be involved in the riboflavin biosynthesis pathway. Is also able to dephosphorylate flavin mononucleotide (FMN) and other phosphoric acid esters. YigB is important for the formation of dormant persister cells. This is 5-amino-6-(5-phospho-D-ribitylamino)uracil phosphatase YigB (yigB) from Escherichia coli (strain K12).